Here is a 216-residue protein sequence, read N- to C-terminus: Cytochrome c oxidase assembly protein CtaG (216 aa).

Residues 1 to 23 (MTDAPQHPQQPATGTPATPKAAP) show a composition bias toward low complexity. The disordered stretch occupies residues 1–24 (MTDAPQHPQQPATGTPATPKAAPR). At 1-26 (MTDAPQHPQQPATGTPATPKAAPRVG) the chain is on the cytoplasmic side. Residues 27–49 (RDVRIGATCGLLVALMVGAAYAA) form a helical; Signal-anchor for type II membrane protein membrane-spanning segment. The Periplasmic portion of the chain corresponds to 50-216 (VPFYNWFCRA…SEPDRPGGSI (167 aa)).

The protein belongs to the COX11/CtaG family.

It is found in the cell inner membrane. Exerts its effect at some terminal stage of cytochrome c oxidase synthesis, probably by being involved in the insertion of the copper B into subunit I. The polypeptide is Cytochrome c oxidase assembly protein CtaG (Nitrobacter hamburgensis (strain DSM 10229 / NCIMB 13809 / X14)).